Consider the following 143-residue polypeptide: uncharacterized protein (143 aa).

It belongs to the OsmC/Ohr family.

This is an uncharacterized protein from Acinetobacter baylyi (strain ATCC 33305 / BD413 / ADP1).